We begin with the raw amino-acid sequence, 192 residues long: Signal peptidase complex catalytic subunit sec11 (192 aa).

Topologically, residues 1–18 are cytoplasmic; it reads MLSFLSSNLSSTRQSLAQ. A helical; Signal-anchor for type II membrane protein transmembrane segment spans residues 19–39; it reads VLNFALVLSTAFMLWKGLSVF. The Lumenal portion of the chain corresponds to 40-192; sequence TASSSPIVVV…GLMVILQREQ (153 aa). Active-site charge relay system residues include Ser-53, His-92, and Asp-133. The interval 177–188 is C-terminal short (CTS) helix; sequence VLLGIMGLMVIL.

It belongs to the peptidase S26B family. As to quaternary structure, component of the signal peptidase complex (SPC) composed of a catalytic subunit SEC11 and three accessory subunits SPC1, SPC2 and SPC3. The complex induces a local thinning of the ER membrane which is used to measure the length of the signal peptide (SP) h-region of protein substrates. This ensures the selectivity of the complex towards h-regions shorter than 18-20 amino acids. SPC associates with the translocon complex.

It localises to the endoplasmic reticulum membrane. The enzyme catalyses Cleavage of hydrophobic, N-terminal signal or leader sequences from secreted and periplasmic proteins.. In terms of biological role, catalytic component of the signal peptidase complex (SPC) which catalyzes the cleavage of N-terminal signal sequences from nascent proteins as they are translocated into the lumen of the endoplasmic reticulum. Specifically cleaves N-terminal signal peptides that contain a hydrophobic alpha-helix (h-region) shorter than 18-20 amino acids. The sequence is that of Signal peptidase complex catalytic subunit sec11 (sec11) from Neosartorya fischeri (strain ATCC 1020 / DSM 3700 / CBS 544.65 / FGSC A1164 / JCM 1740 / NRRL 181 / WB 181) (Aspergillus fischerianus).